A 142-amino-acid chain; its full sequence is Putative pre-16S rRNA nuclease (142 aa).

Belongs to the YqgF nuclease family.

It localises to the cytoplasm. Functionally, could be a nuclease involved in processing of the 5'-end of pre-16S rRNA. This chain is Putative pre-16S rRNA nuclease, found in Azotobacter vinelandii (strain DJ / ATCC BAA-1303).